Consider the following 395-residue polypeptide: Cyclin-A2 (395 aa).

Positions 1 to 93 (MLAEQENQEN…EEAADAPGLR (93 aa)) are disordered. The segment covering 27–60 (ALGLLRGGPARPGPAAQAARNGEGRGAAAGQQQQ) has biased composition (low complexity).

Belongs to the cyclin family. Cyclin AB subfamily. In terms of assembly, interacts with the CDK1 and CDK2 protein kinases to form serine/threonine kinase holoenzyme complexes.

It localises to the nucleus. The protein resides in the cytoplasm. Its function is as follows. Cyclin which controls both the G1/S and the G2/M transition phases of the cell cycle. Functions through the formation of specific serine/threonine kinase holoenzyme complexes with the cyclin-dependent protein kinases CDK1 and CDK2. The cyclin subunit confers the substrate specificity of these complexes and differentially interacts with and activates CDK1 and CDK2 throughout the cell cycle. The chain is Cyclin-A2 from Gallus gallus (Chicken).